We begin with the raw amino-acid sequence, 456 residues long: Adenylosuccinate lyase (456 aa).

N(6)-(1,2-dicarboxyethyl)-AMP is bound by residues 15–16 (RY), 90–92 (NHD), and 122–123 (TS). His-171 acts as the Proton donor/acceptor in catalysis. Gln-247 is a binding site for N(6)-(1,2-dicarboxyethyl)-AMP. Ser-295 acts as the Proton donor/acceptor in catalysis. N(6)-(1,2-dicarboxyethyl)-AMP contacts are provided by residues Ser-296, 301–303 (KVN), Asn-309, Arg-335, and 340–344 (STVLR).

It belongs to the lyase 1 family. Adenylosuccinate lyase subfamily. In terms of assembly, homotetramer. Residues from neighboring subunits contribute catalytic and substrate-binding residues to each active site.

It catalyses the reaction N(6)-(1,2-dicarboxyethyl)-AMP = fumarate + AMP. The catalysed reaction is (2S)-2-[5-amino-1-(5-phospho-beta-D-ribosyl)imidazole-4-carboxamido]succinate = 5-amino-1-(5-phospho-beta-D-ribosyl)imidazole-4-carboxamide + fumarate. It functions in the pathway purine metabolism; AMP biosynthesis via de novo pathway; AMP from IMP: step 2/2. It participates in purine metabolism; IMP biosynthesis via de novo pathway; 5-amino-1-(5-phospho-D-ribosyl)imidazole-4-carboxamide from 5-amino-1-(5-phospho-D-ribosyl)imidazole-4-carboxylate: step 2/2. Functionally, catalyzes two reactions in de novo purine nucleotide biosynthesis. Catalyzes the breakdown of 5-aminoimidazole- (N-succinylocarboxamide) ribotide (SAICAR or 2-[5-amino-1-(5-phospho-beta-D-ribosyl)imidazole-4-carboxamido]succinate) to 5-aminoimidazole-4-carboxamide ribotide (AICAR or 5-amino-1-(5-phospho-beta-D-ribosyl)imidazole-4-carboxamide) and fumarate, and of adenylosuccinate (ADS or N(6)-(1,2-dicarboxyethyl)-AMP) to adenosine monophosphate (AMP) and fumarate. The polypeptide is Adenylosuccinate lyase (purB) (Haemophilus influenzae (strain ATCC 51907 / DSM 11121 / KW20 / Rd)).